A 5098-amino-acid chain; its full sequence is Malformin synthetase mlfA (5098 aa).

Residues 225–616 (ERHAANRPHS…CGRADTQVKL (392 aa)) form an adenylation 1 region. The region spanning 756-829 (SRLEQEIQLA…EAASLAKVQE (74 aa)) is the Carrier 1 domain. Ser-790 is modified (O-(pantetheine 4'-phosphoryl)serine). Residues 867–1298 (EDVFPCTTMQ…ALDSLTLLQA (432 aa)) form a condensation 1 region. Residues 1326 to 1715 (DGWVTRQPES…GRKDTQVKLR (390 aa)) are adenylation 2. The Carrier 2 domain maps to 1853–1930 (TAASELERTL…QLAAEFGEPA (78 aa)). The residue at position 1890 (Ser-1890) is an O-(pantetheine 4'-phosphoryl)serine. 2 disordered regions span residues 1930 to 1960 (AGQS…DGVD) and 1993 to 2022 (GSSS…RVVS). 2 stretches are compositionally biased toward low complexity: residues 1933 to 1957 (SASS…STND) and 1993 to 2011 (GSSS…SSSS). The interval 2063–2478 (EDIYPATALQ…ALSHSDRQTL (416 aa)) is condensation 2. Positions 2501 to 2893 (VRTPHAPAVC…IGRRDGQLKL (393 aa)) are adenylation 3. Residues 3029-3105 (RPVTAQEREM…QLMRHLSATR (77 aa)) form the Carrier 3 domain. Position 3066 is an O-(pantetheine 4'-phosphoryl)serine (Ser-3066). 2 condensation regions span residues 3122–3587 (WVAL…TYDQ) and 3608–4027 (NIYP…EQLM). The adenylation 4 stretch occupies residues 4052–4442 (HASREAVCAW…VGRKDNQIKF (391 aa)). The 77-residue stretch at 4576-4652 (MPSTAAERKM…DLAYRTTNLV (77 aa)) folds into the Carrier 4 domain. O-(pantetheine 4'-phosphoryl)serine is present on Ser-4613. The tract at residues 4689 to 5016 (DVLPTTSFQR…LQTIVQHQNN (328 aa)) is condensation 5.

It belongs to the NRP synthetase family.

Its pathway is secondary metabolite biosynthesis. In terms of biological role, nonribosomal peptide synthetase; part of the gene cluster that mediates the biosynthesis of malformins, cyclic pentapeptides with a disulfide bond between 2 consecutive cysteins, that show potential anti-tumor as well as antimalarial and antitrypanosomal properties. The nonribosomal peptide synthetase mlfA is responsible of the formation of the cyclic pentapeptide. The malformin biosynthesis clusters in malformin-producing fungi also contain enzymes involved in the formation of the disulfide bond between the two consecutive cysteins within malformins, in addition to additional tailoring enzymes such as methyltransferases or oxidoreductases. They are also composed of up to 4 major facilitator superfamily transporters, and transcription factors probably involved in the regulation of the expression of those clusters. The sequence is that of Malformin synthetase mlfA from Aspergillus homomorphus (strain CBS 101889).